The following is a 227-amino-acid chain: Small ribosomal subunit protein uS3 (227 aa).

The KH type-2 domain maps to 39 to 107; sequence VREFLDKRLV…PVHINIEEVR (69 aa).

It belongs to the universal ribosomal protein uS3 family. As to quaternary structure, part of the 30S ribosomal subunit. Forms a tight complex with proteins S10 and S14.

Functionally, binds the lower part of the 30S subunit head. Binds mRNA in the 70S ribosome, positioning it for translation. The chain is Small ribosomal subunit protein uS3 from Marinobacter nauticus (strain ATCC 700491 / DSM 11845 / VT8) (Marinobacter aquaeolei).